Here is a 291-residue protein sequence, read N- to C-terminus: ATP synthase gamma chain (291 aa).

Belongs to the ATPase gamma chain family. In terms of assembly, F-type ATPases have 2 components, CF(1) - the catalytic core - and CF(0) - the membrane proton channel. CF(1) has five subunits: alpha(3), beta(3), gamma(1), delta(1), epsilon(1). CF(0) has three main subunits: a, b and c.

It localises to the cell membrane. Functionally, produces ATP from ADP in the presence of a proton gradient across the membrane. The gamma chain is believed to be important in regulating ATPase activity and the flow of protons through the CF(0) complex. The polypeptide is ATP synthase gamma chain (Streptococcus pyogenes serotype M1).